A 442-amino-acid chain; its full sequence is ATP-dependent RNA helicase SUB2-2 (442 aa).

Residues 58-86 (TGFKDFLLKPELARAIIDCGFEHPSEVQQ) carry the Q motif motif. The 176-residue stretch at 89–264 (IPQSIHGTDV…RRFLQNPLEI (176 aa)) folds into the Helicase ATP-binding domain. Position 102 to 109 (102 to 109 (AKSGLGKT)) interacts with ATP. The short motif at 211 to 214 (DECD) is the DECD box element. The Helicase C-terminal domain occupies 292-437 (KLAQLLDDLE…EFPEEGIDPS (146 aa)).

Belongs to the DEAD box helicase family. DECD subfamily.

The protein localises to the nucleus. The enzyme catalyses ATP + H2O = ADP + phosphate + H(+). ATP-binding RNA helicase involved in transcription elongation and required for the export of mRNA out of the nucleus. SUB2 also plays a role in pre-mRNA splicing and spliceosome assembly. May be involved in rDNA and telomeric silencing, and maintenance of genome integrity. The sequence is that of ATP-dependent RNA helicase SUB2-2 (SUB2-2) from Vanderwaltozyma polyspora (strain ATCC 22028 / DSM 70294 / BCRC 21397 / CBS 2163 / NBRC 10782 / NRRL Y-8283 / UCD 57-17) (Kluyveromyces polysporus).